The following is a 358-amino-acid chain: RNA demethylase ALKBH5 (358 aa).

The disordered stretch occupies residues 1–50 (MSATYTDLREKLQSLYRDSPKEVRKRKQPTSDTEEEEAASEPEEEEEARK). A compositionally biased stretch (basic and acidic residues) spans 7-22 (DLREKLQSLYRDSPKE). Positions 32–46 (DTEEEEAASEPEEEE) are enriched in acidic residues. The active site involves Tyr-105. 5 residues coordinate 2-oxoglutarate: Asn-159, Tyr-161, His-170, His-232, and Arg-243. Cys-196 and Cys-233 are oxidised to a cystine. Disordered regions lie at residues 259 to 312 (EMKS…RRSV) and 334 to 358 (DYVD…MRRH). The span at 262–278 (SLSSSYQPERLQGSNRQ) shows a compositional bias: polar residues. Over residues 279–288 (HILKPKRSHR) the composition is skewed to basic residues. A compositionally biased stretch (basic and acidic residues) spans 289 to 310 (KADPDAAHRPRILEMDKEENRR).

It belongs to the alkB family. In terms of assembly, monomer. Fe(2+) serves as cofactor.

It localises to the nucleus speckle. The catalysed reaction is an N(6)-methyladenosine in mRNA + 2-oxoglutarate + O2 = an adenosine in mRNA + formaldehyde + succinate + CO2. Functionally, dioxygenase that specifically demethylates N(6)-methyladenosine (m6A) RNA, the most prevalent internal modification of messenger RNA (mRNA) in higher eukaryotes. Demethylates RNA by oxidative demethylation, which requires molecular oxygen, alpha-ketoglutarate and iron. Demethylation of m6A mRNA affects mRNA processing, translation and export. In Xenopus tropicalis (Western clawed frog), this protein is RNA demethylase ALKBH5 (alkbh5).